A 585-amino-acid chain; its full sequence is Probable glucomannan 4-beta-mannosyltransferase 7 (585 aa).

Residues 87 to 107 traverse the membrane as a helical segment; it reads VIAPTLQVAVWVCMVMSVMLV. D188 is a catalytic residue. 2 residues coordinate substrate: D247 and D249. Residue D341 is part of the active site. A run of 4 helical transmembrane segments spans residues 420–440, 443–463, 534–554, and 563–583; these read VVAPMVACVLYNIIVPLSVMI, LFIPIWGVAYIPMALLIITTI, LPEIGFSVFLIFCASYNLIFH, and LYLQGLAFLLLGFNFTGNFAC.

Belongs to the glycosyltransferase 2 family. Plant cellulose synthase-like A subfamily.

It localises to the golgi apparatus membrane. The catalysed reaction is GDP-mannose + (glucomannan)n = GDP + (glucomannan)n+1.. In terms of biological role, probable mannan synthase which consists of a 4-beta-mannosyltransferase activity on mannan using GDP-mannose. The beta-1,4-mannan product is the backbone for galactomannan synthesis by galactomannan galactosyltransferase. Galactomannan is a noncellulosic polysaccharides of plant cell wall. This Oryza sativa subsp. japonica (Rice) protein is Probable glucomannan 4-beta-mannosyltransferase 7.